A 750-amino-acid chain; its full sequence is Tyrosine-protein phosphatase 2 (750 aa).

Residues 1-20 (MDRIAQQYRNGKRDNNGNRM) are disordered. Serine 258 is subject to Phosphoserine. 2 disordered regions span residues 327–348 (LHQK…SKLY) and 425–450 (VKLP…DKSY). Residues 330-348 (KQLSQKQRGPQSTDDSKLY) show a composition bias toward polar residues. Residues 383–737 (SPSPLSSDDT…IACYEALLNY (355 aa)) enclose the Tyrosine-protein phosphatase domain. Serine 430 is modified (phosphoserine). The Phosphocysteine intermediate role is filled by cysteine 666.

This sequence belongs to the protein-tyrosine phosphatase family. Non-receptor class subfamily. As to quaternary structure, interacts with HOG1.

Its subcellular location is the cytoplasm. It is found in the nucleus. The catalysed reaction is O-phospho-L-tyrosyl-[protein] + H2O = L-tyrosyl-[protein] + phosphate. Functionally, major phosphatase responsible with PTP3 for tyrosine dephosphorylation of MAP kinase HOG1 to inactivate its activity. May also be involved in the regulation of MAP kinase FUS3. May be implicated in the ubiquitin-mediated protein degradation. The sequence is that of Tyrosine-protein phosphatase 2 (PTP2) from Saccharomyces cerevisiae (strain ATCC 204508 / S288c) (Baker's yeast).